The primary structure comprises 195 residues: uncharacterized protein (195 aa).

The HD domain maps to 24–141; sequence NTDENLKLIF…VFLADKISWD (118 aa).

This is an uncharacterized protein from Lactococcus lactis subsp. cremoris (Streptococcus cremoris).